The following is a 273-amino-acid chain: Dermonecrotic toxin LapSicTox-alphaIB1c (273 aa).

H5 is an active-site residue. Residues E25 and D27 each coordinate Mg(2+). Residue H41 is the Nucleophile of the active site. Disulfide bonds link C45/C51 and C47/C190. D85 lines the Mg(2+) pocket. An N-linked (GlcNAc...) asparagine glycan is attached at N250.

Belongs to the arthropod phospholipase D family. Class II subfamily. Requires Mg(2+) as cofactor. Expressed by the venom gland.

It is found in the secreted. The catalysed reaction is an N-(acyl)-sphingosylphosphocholine = an N-(acyl)-sphingosyl-1,3-cyclic phosphate + choline. It catalyses the reaction an N-(acyl)-sphingosylphosphoethanolamine = an N-(acyl)-sphingosyl-1,3-cyclic phosphate + ethanolamine. The enzyme catalyses a 1-acyl-sn-glycero-3-phosphocholine = a 1-acyl-sn-glycero-2,3-cyclic phosphate + choline. It carries out the reaction a 1-acyl-sn-glycero-3-phosphoethanolamine = a 1-acyl-sn-glycero-2,3-cyclic phosphate + ethanolamine. Its function is as follows. Dermonecrotic toxins cleave the phosphodiester linkage between the phosphate and headgroup of certain phospholipids (sphingolipid and lysolipid substrates), forming an alcohol (often choline) and a cyclic phosphate. This toxin acts on sphingomyelin (SM). It may also act on ceramide phosphoethanolamine (CPE), lysophosphatidylcholine (LPC) and lysophosphatidylethanolamine (LPE), but not on lysophosphatidylserine (LPS), and lysophosphatidylglycerol (LPG). It acts by transphosphatidylation, releasing exclusively cyclic phosphate products as second products. Induces dermonecrosis, hemolysis, increased vascular permeability, edema, inflammatory response, and platelet aggregation. The chain is Dermonecrotic toxin LapSicTox-alphaIB1c from Loxosceles apachea (Apache recluse spider).